A 578-amino-acid chain; its full sequence is Paraneoplastic antigen Ma6F (578 aa).

2 disordered regions span residues 106 to 221 (AQPQ…AGAA) and 441 to 578 (AAPV…PPGK). A compositionally biased stretch (low complexity) spans 112–129 (AVARGAGEAGAAGEAGSV). A compositionally biased stretch (gly residues) spans 147–159 (GGIGEAGGVGEAG). Residues 160–173 (AAGEAGAAGEAGAA) are compositionally biased toward low complexity. Residues 174-211 (GEAGGAGEAGGAGEAGGAGEEGGTGEEGGAGEAGGAGE) show a composition bias toward gly residues. The segment covering 449 to 461 (PAAAQASPAQGDA) has biased composition (low complexity). 2 stretches are compositionally biased toward acidic residues: residues 462–473 (SEADPGAEDADE) and 556–566 (EESENEDEDGA).

This Homo sapiens (Human) protein is Paraneoplastic antigen Ma6F.